A 402-amino-acid polypeptide reads, in one-letter code: Sensor protein kinase FleS (402 aa).

In terms of domain architecture, Histidine kinase spans 188–393 (SLAHQIRTPL…CATLILPLIP (206 aa)). Histidine 191 bears the Phosphohistidine; by autocatalysis mark.

It carries out the reaction ATP + protein L-histidine = ADP + protein N-phospho-L-histidine.. Member of the two-component regulatory system FleS/FleR that regulates the expression of multiple genes involved in flagellar synthesis, adhesion, swarming, motility and antibiotic resistance. May function as a membrane-associated protein kinase that phosphorylates FleR in response to environmental signals leading to activation of specific gene promoters. The chain is Sensor protein kinase FleS (fleS) from Pseudomonas aeruginosa (strain ATCC 15692 / DSM 22644 / CIP 104116 / JCM 14847 / LMG 12228 / 1C / PRS 101 / PAO1).